The primary structure comprises 361 residues: S-adenosylmethionine:tRNA ribosyltransferase-isomerase (361 aa).

This sequence belongs to the QueA family. In terms of assembly, monomer.

It is found in the cytoplasm. The enzyme catalyses 7-aminomethyl-7-carbaguanosine(34) in tRNA + S-adenosyl-L-methionine = epoxyqueuosine(34) in tRNA + adenine + L-methionine + 2 H(+). It functions in the pathway tRNA modification; tRNA-queuosine biosynthesis. In terms of biological role, transfers and isomerizes the ribose moiety from AdoMet to the 7-aminomethyl group of 7-deazaguanine (preQ1-tRNA) to give epoxyqueuosine (oQ-tRNA). This Rhizobium johnstonii (strain DSM 114642 / LMG 32736 / 3841) (Rhizobium leguminosarum bv. viciae) protein is S-adenosylmethionine:tRNA ribosyltransferase-isomerase.